A 231-amino-acid polypeptide reads, in one-letter code: DNA mismatch repair protein MutH (231 aa).

Belongs to the MutH family.

It is found in the cytoplasm. In terms of biological role, sequence-specific endonuclease that cleaves unmethylated GATC sequences. It is involved in DNA mismatch repair. The chain is DNA mismatch repair protein MutH from Klebsiella pneumoniae (strain 342).